A 147-amino-acid chain; its full sequence is uncharacterized protein (147 aa).

This sequence to B.subtilis XkdM.

This is an uncharacterized protein from Bacillus subtilis (strain 168).